A 111-amino-acid chain; its full sequence is Large ribosomal subunit protein uL24 (111 aa).

Belongs to the universal ribosomal protein uL24 family. Part of the 50S ribosomal subunit.

In terms of biological role, one of two assembly initiator proteins, it binds directly to the 5'-end of the 23S rRNA, where it nucleates assembly of the 50S subunit. Functionally, one of the proteins that surrounds the polypeptide exit tunnel on the outside of the subunit. This chain is Large ribosomal subunit protein uL24, found in Chlamydia trachomatis serovar A (strain ATCC VR-571B / DSM 19440 / HAR-13).